The primary structure comprises 406 residues: NIPA-like protein 3 (406 aa).

Helical transmembrane passes span 33-53 (NLIG…ALNL), 76-96 (WWLG…SYAF), 101-121 (LIVP…IIFI), and 135-155 (ILSF…VTFA). An N-linked (GlcNAc...) asparagine glycan is attached at Asn-166. Transmembrane regions (helical) follow at residues 171–191 (LVSW…CLLL), 202–222 (IVVI…TVKA), 240–260 (PIFY…AAFL), 271–291 (LIAS…GAIF), and 300–320 (VLHI…VFLI). Ser-372 bears the Phosphoserine mark.

This sequence belongs to the NIPA family.

The protein localises to the membrane. This is NIPA-like protein 3 (NIPAL3) from Pongo abelii (Sumatran orangutan).